Consider the following 432-residue polypeptide: Pachytene checkpoint protein 2 homolog (432 aa).

M1 carries the N-acetylmethionine modification. Position 179-186 (179-186 (GPPGTGKT)) interacts with ATP.

This sequence belongs to the AAA ATPase family. PCH2 subfamily. Specifically interacts with the ligand binding domain of the thyroid receptor (TR). This interaction does not require the presence of thyroid hormone for its interaction. Interacts with HPV16 E1. Interacts with proteasome subunit PSMA8; to participate in meiosis progression during spermatogenesis.

Functionally, plays a key role in chromosome recombination and chromosome structure development during meiosis. Required at early steps in meiotic recombination that leads to non-crossovers pathways. Also needed for efficient completion of homologous synapsis by influencing crossover distribution along the chromosomes affecting both crossovers and non-crossovers pathways. Also required for development of higher-order chromosome structures and is needed for synaptonemal-complex formation. In males, required for efficient synapsis of the sex chromosomes and for sex body formation. Promotes early steps of the DNA double-strand breaks (DSBs) repair process upstream of the assembly of RAD51 complexes. Required for depletion of HORMAD1 and HORMAD2 from synapsed chromosomes. Plays a role in mitotic spindle assembly checkpoint (SAC) activation. The sequence is that of Pachytene checkpoint protein 2 homolog (TRIP13) from Homo sapiens (Human).